The sequence spans 962 residues: MVSSRRGFNPIAFTPWPVTILSSLVYLALIIPIIVVHHLVPPAPKESPAGVDLEEAWHDLQHLTRQYHPYNSHSNDEVHQWLLKRIHAISATSARSESQSGPEVFVFDDNQTNLTFSSAGVAATAITGVYFESRNIVVYIRGTEDEPGEWWKSPDGEPSGKGGVLVNAHYDSVSTGYGATDNGVGVITTLQLLKYFTTPGHYPRKGLVLLFNNGEEDFLNGAYAYSQHPMSKFTHTFLNLEGAGAGGRAVLFRSTDTEVTRFYGKSEHPFGTVLARDAFKLKFIRSETDYHVFDGVFGMRGLDVAFMEPRSRYHTDQDDARHTSIDSVWHMLSAAITTTEGLVSYTGDAFDGDSGDGGKLNNGIGTLGVWFDFFGSSFAVFQLNTLFGHSVALLVVAPLLLIITSVALFAVDKMYMFSMYTYISESGGQVSLYGLRGMFRFPLILGISTALTIALAFLIMKVNPFIIYSSPYAVWSMMLSTCMFFAWFISCVADFARPSALHRAYSFSWMFGIMWVFLVIATVYQKQHGIASSYFIVFYFAGVAVATWISYLELFGLPKTQDYARRQGRLSDRTPSSDSHFLAPSADELPSSSSAAGRDFNPEDVEDEEPTESTSLLRGQQRTTFANYASARGSQESNISNQGNNSLHPKDHRLEQKWSIYLMSSAWILQFLLVAPIVIILLGQLGLFLTSATYQIGADGGSQLVIYIGIAVLSVLILLPLFPFIHRFTYHIPTFLLFILIGTLVYNLTAFPFSHSNRLKLAFVQEMDLATGNNQASLVGVEPYIHDAVHAIPSVQDGKISCTSHGYGGRTKCSWPGLKPKVAEGPYKDWVSYNISKTKDDKITRFEVSGKNTRACKLLFDSPIADFHVQGSVVDKRLPHTGPKGVSEIRLWSRNWENTWTVDVEWTKKNSERTGKVMCLWSDDNDLHVIPELDLARKFAPWWVAITKLRDGLVEGSYSFKL.

Residues 1–15 (MVSSRRGFNPIAFTP) are Cytoplasmic-facing. Residues 16-36 (WPVTILSSLVYLALIIPIIVV) traverse the membrane as a helical segment. Residues 37-390 (HHLVPPAPKE…FQLNTLFGHS (354 aa)) are Vacuolar-facing. N-linked (GlcNAc...) asparagine glycans are attached at residues asparagine 110 and asparagine 113. Positions 169 and 181 each coordinate Zn(2+). The Proton acceptor role is filled by glutamate 215. Zn(2+) is bound by residues glutamate 216, glutamate 241, and histidine 314. The chain crosses the membrane as a helical span at residues 391–411 (VALLVVAPLLLIITSVALFAV). At 412–440 (DKMYMFSMYTYISESGGQVSLYGLRGMFR) the chain is on the cytoplasmic side. A helical membrane pass occupies residues 441–461 (FPLILGISTALTIALAFLIMK). At 462–472 (VNPFIIYSSPY) the chain is on the vacuolar side. A helical membrane pass occupies residues 473–493 (AVWSMMLSTCMFFAWFISCVA). At 494 to 503 (DFARPSALHR) the chain is on the cytoplasmic side. The chain crosses the membrane as a helical span at residues 504–524 (AYSFSWMFGIMWVFLVIATVY). The Vacuolar segment spans residues 525 to 534 (QKQHGIASSY). The helical transmembrane segment at 535–555 (FIVFYFAGVAVATWISYLELF) threads the bilayer. At 556–667 (GLPKTQDYAR…WSIYLMSSAW (112 aa)) the chain is on the cytoplasmic side. A disordered region spans residues 568–617 (GRLSDRTPSSDSHFLAPSADELPSSSSAAGRDFNPEDVEDEEPTESTSLL). Residues 602 to 611 (PEDVEDEEPT) show a composition bias toward acidic residues. Residues 668–688 (ILQFLLVAPIVIILLGQLGLF) form a helical membrane-spanning segment. The Vacuolar portion of the chain corresponds to 689–704 (LTSATYQIGADGGSQL). Residues 705 to 725 (VIYIGIAVLSVLILLPLFPFI) traverse the membrane as a helical segment. At 726 to 731 (HRFTYH) the chain is on the cytoplasmic side. Residues 732 to 752 (IPTFLLFILIGTLVYNLTAFP) traverse the membrane as a helical segment. Residues 753-962 (FSHSNRLKLA…LVEGSYSFKL (210 aa)) lie on the Vacuolar side of the membrane. Asparagine 834 is a glycosylation site (N-linked (GlcNAc...) asparagine).

The protein belongs to the peptidase M28 family. The cofactor is Zn(2+).

It is found in the vacuole membrane. In terms of biological role, may be involved in vacuolar sorting and osmoregulation. This chain is Vacuolar membrane protease, found in Arthroderma benhamiae (strain ATCC MYA-4681 / CBS 112371) (Trichophyton mentagrophytes).